The chain runs to 379 residues: NADH-quinone oxidoreductase subunit D 2 (379 aa).

This sequence belongs to the complex I 49 kDa subunit family. As to quaternary structure, NDH-1 is composed of 14 different subunits. Subunits NuoB, C, D, E, F, and G constitute the peripheral sector of the complex.

The protein resides in the cell inner membrane. The catalysed reaction is a quinone + NADH + 5 H(+)(in) = a quinol + NAD(+) + 4 H(+)(out). NDH-1 shuttles electrons from NADH, via FMN and iron-sulfur (Fe-S) centers, to quinones in the respiratory chain. The immediate electron acceptor for the enzyme in this species is believed to be ubiquinone. Couples the redox reaction to proton translocation (for every two electrons transferred, four hydrogen ions are translocated across the cytoplasmic membrane), and thus conserves the redox energy in a proton gradient. The protein is NADH-quinone oxidoreductase subunit D 2 of Anaeromyxobacter dehalogenans (strain 2CP-C).